We begin with the raw amino-acid sequence, 817 residues long: Protein-glutamine gamma-glutamyltransferase K (817 aa).

2 disordered regions span residues 1–38 (MMDG…SRRG) and 59–105 (DDWG…DGTI). The tract at residues 1 to 100 (MMDGPRSDVG…VSRGSGVNAA (100 aa)) is membrane anchorage region. Positions 17 to 26 (LQPPTTPSPE) are enriched in pro residues. Residue T22 is modified to Phosphothreonine. Phosphoserine is present on residues S24, S68, S82, S85, S92, and S95. A compositionally biased stretch (low complexity) spans 71-84 (RGSSSGTRRPGSRG). Catalysis depends on residues C377, H436, and D459. Ca(2+) is bound by residues N499, D501, E548, and E553. Residues 793–817 (GGFFSDAGGDSHLGETIPMASRGGA) form a disordered region.

Belongs to the transglutaminase superfamily. Transglutaminase family. Interacts with PLAAT4. Requires Ca(2+) as cofactor. Palmitoylated. In terms of processing, the membrane anchorage region possesses a cluster of five cysteines within which fatty acid(s) may become thioester-linked. It is subject to phorbol ester-stimulated phosphorylation and is hypersensitive to proteolysis, which releases the enzyme in a soluble form. Post-translationally, tyrosine-phosphorylated.

The protein localises to the membrane. It carries out the reaction L-glutaminyl-[protein] + L-lysyl-[protein] = [protein]-L-lysyl-N(6)-5-L-glutamyl-[protein] + NH4(+). Catalyzes the cross-linking of proteins and the conjugation of polyamines to proteins. Responsible for cross-linking epidermal proteins during formation of the stratum corneum. Involved in cell proliferation. The sequence is that of Protein-glutamine gamma-glutamyltransferase K (TGM1) from Homo sapiens (Human).